A 238-amino-acid polypeptide reads, in one-letter code: uncharacterized protein (238 aa).

4 consecutive transmembrane segments (helical) span residues 13 to 33 (TLFFIYFVFLTSFCLCFFGII), 40 to 60 (GSVGQLIAKLVVIVVLTLILG), 107 to 127 (VVLILSLVLTYYLSIYAFCQV), and 140 to 160 (VISLIILIFFLSLSFFVPMAF). 4Fe-4S ferredoxin-type domains lie at 178-208 (PFFQLKTNNNCVKCKLCEFKCPMQIKITEKL) and 204-233 (ITEKLDQKECIRCFECKSSCKKDALSFSYA). The [4Fe-4S] cluster site is built by C188, C191, C194, C198, C213, C216, C219, and C223.

The protein localises to the cell membrane. This is an uncharacterized protein from Methanocaldococcus jannaschii (strain ATCC 43067 / DSM 2661 / JAL-1 / JCM 10045 / NBRC 100440) (Methanococcus jannaschii).